A 368-amino-acid polypeptide reads, in one-letter code: H-2 class I histocompatibility antigen, D-P alpha chain (368 aa).

The N-terminal stretch at 1 to 21 is a signal peptide; sequence MAPRTLLLLLAAALAPTQTRA. The interval 22–111 is alpha-1; it reads GPHSLRYFVT…LLGYYNQSKG (90 aa). The Extracellular segment spans residues 22-303; sequence GPHSLRYFVT…RWEPPPSTDS (282 aa). An N-linked (GlcNAc...) asparagine glycan is attached at asparagine 107. The segment at 112–203 is alpha-2; that stretch reads GSHTIQGMRG…ELGNATLLCT (92 aa). Cysteine 122 and cysteine 185 are oxidised to a cystine. Residues asparagine 197 and asparagine 277 are each glycosylated (N-linked (GlcNAc...) asparagine). The segment at 204-295 is alpha-3; sequence DPPKAHVTHH…GLPEPLTLRW (92 aa). An Ig-like C1-type domain is found at 206-294; the sequence is PKAHVTHHPR…EGLPEPLTLR (89 aa). Cysteine 224 and cysteine 280 are oxidised to a cystine. Positions 296 to 303 are connecting peptide; it reads EPPPSTDS. The chain crosses the membrane as a helical span at residues 304-330; the sequence is YMVIVAVLVVLGAVFIIGAVVAFVMMM. At 331-368 the chain is on the cytoplasmic side; sequence RRNTGGKGGDYTLAPGSQSSEMSLRDCKVMVHDSHSLA. A phosphoserine mark is found at serine 350 and serine 353.

It belongs to the MHC class I family. As to quaternary structure, heterodimer of an alpha chain and a beta chain (beta-2-microglobulin).

It is found in the membrane. Functionally, involved in the presentation of foreign antigens to the immune system. This is H-2 class I histocompatibility antigen, D-P alpha chain (H2-D1) from Mus musculus (Mouse).